Consider the following 45-residue polypeptide: DNA-directed RNA polymerase subunit Rpo12 (45 aa).

Zn(2+)-binding residues include cysteine 8, cysteine 23, and cysteine 26.

The protein belongs to the archaeal Rpo12/eukaryotic RPC10 RNA polymerase subunit family. Part of the RNA polymerase complex. Zn(2+) serves as cofactor.

It is found in the cytoplasm. The catalysed reaction is RNA(n) + a ribonucleoside 5'-triphosphate = RNA(n+1) + diphosphate. Its function is as follows. DNA-dependent RNA polymerase (RNAP) catalyzes the transcription of DNA into RNA using the four ribonucleoside triphosphates as substrates. This Methanothrix thermoacetophila (strain DSM 6194 / JCM 14653 / NBRC 101360 / PT) (Methanosaeta thermophila) protein is DNA-directed RNA polymerase subunit Rpo12.